Here is a 406-residue protein sequence, read N- to C-terminus: uncharacterized protein (406 aa).

This is an uncharacterized protein from Acanthamoeba polyphaga mimivirus (APMV).